The chain runs to 64 residues: DNA-directed RNA polymerase subunit Rpo10 (64 aa).

Residues Cys7, Cys10, Cys45, and Cys46 each contribute to the Zn(2+) site.

This sequence belongs to the archaeal Rpo10/eukaryotic RPB10 RNA polymerase subunit family. As to quaternary structure, part of the RNA polymerase complex. Zn(2+) is required as a cofactor.

It localises to the cytoplasm. The enzyme catalyses RNA(n) + a ribonucleoside 5'-triphosphate = RNA(n+1) + diphosphate. DNA-dependent RNA polymerase (RNAP) catalyzes the transcription of DNA into RNA using the four ribonucleoside triphosphates as substrates. This chain is DNA-directed RNA polymerase subunit Rpo10, found in Halorubrum lacusprofundi (strain ATCC 49239 / DSM 5036 / JCM 8891 / ACAM 34).